The sequence spans 288 residues: MESGDLKIFQAVARKGSISKAAESLHYVQSNVTNRIQQLERQLQTQLFYRTNRGMTLTPAGENLLKDADRILQLLHEAQKTAQEAGDPNGPLRIGSLETAAAVHLPQFFTEYCSRYPKVQLSLSTGDTHTLVQHILHYELDGAFVYGPVEYEDLEQVAVFQEELVLASNKREGSLQDLLREPILYFAAGCSHRRKIKNILKEEAVPAHKIIEFGTLEAIIGAVQAGMGVSFLPASAVRYFQNRKNLFLHELPEQFRDMNISFIYQSDLFLTSAFEELLNGLKALPNGR.

In terms of domain architecture, HTH lysR-type spans 1 to 58 (MESGDLKIFQAVARKGSISKAAESLHYVQSNVTNRIQQLERQLQTQLFYRTNRGMTLT). Residues 18–37 (ISKAAESLHYVQSNVTNRIQ) constitute a DNA-binding region (H-T-H motif).

Belongs to the LysR transcriptional regulatory family.

It localises to the cytoplasm. Regulates expression of the cell division protein ftsW, and is essential for cell viability during stationary phase. In Bacillus velezensis (strain DSM 23117 / BGSC 10A6 / LMG 26770 / FZB42) (Bacillus amyloliquefaciens subsp. plantarum), this protein is HTH-type transcriptional regulator YofA (yofA).